The sequence spans 109 residues: Flagellar hook-basal body complex protein FliE (109 aa).

This sequence belongs to the FliE family.

Its subcellular location is the bacterial flagellum basal body. The chain is Flagellar hook-basal body complex protein FliE from Stutzerimonas stutzeri (strain A1501) (Pseudomonas stutzeri).